A 319-amino-acid polypeptide reads, in one-letter code: Protein SICKLE (319 aa).

3 disordered regions span residues methionine 1–phenylalanine 59, serine 71–glutamate 239, and cysteine 262–glutamine 299. Polar residues-rich tracts occupy residues threonine 27 to threonine 56 and proline 78 to histidine 88. Pro residues predominate over residues proline 93–proline 103. Polar residues predominate over residues serine 185 to asparagine 210. The segment covering aspartate 228–alanine 238 has biased composition (basic and acidic residues). The span at serine 285–glutamine 299 shows a compositional bias: polar residues.

In terms of assembly, interacts with ubiquitin thioesterases UBP12 and UBP13, and with protein phosphatase 2A subunits PP2AB1, PP2AB2, PP2A3, PP2A4, PP2AA1 and PP2AA2. Expressed in the shoot apical meristem (SAM), embryos, seedlings, root tips, and root and leaf primordia.

It localises to the nucleus. The protein localises to the cytoplasm. The protein resides in the cytosol. In terms of biological role, involved in miRNAs and siRNAs biogenesis and thus promotes gene silencing. Modulates auxin (IAA) transport-related developmental programs by regulating protein phosphatase 2A (PP2As)-driven auxin efflux carrier PIN proteins recycling and polarity. Required during development. Necessary for abiotic stress (e.g. chilling and salt) tolerance. This chain is Protein SICKLE, found in Arabidopsis thaliana (Mouse-ear cress).